The primary structure comprises 230 residues: Ribonuclease 3 (230 aa).

The 134-residue stretch at 1–134 (MKQLEELLST…FLGALLLDKG (134 aa)) folds into the RNase III domain. A Mg(2+)-binding site is contributed by Glu-47. Residue Asp-51 is part of the active site. Residues Asp-120 and Glu-123 each coordinate Mg(2+). The active site involves Glu-123. The region spanning 160–229 (DYKTCLQEFL…AKNALAQLSE (70 aa)) is the DRBM domain.

This sequence belongs to the ribonuclease III family. Homodimer. Mg(2+) serves as cofactor.

Its subcellular location is the cytoplasm. It catalyses the reaction Endonucleolytic cleavage to 5'-phosphomonoester.. In terms of biological role, digests double-stranded RNA. Involved in the processing of primary rRNA transcript to yield the immediate precursors to the large and small rRNAs (23S and 16S). Processes some mRNAs, and tRNAs when they are encoded in the rRNA operon. Processes pre-crRNA and tracrRNA of type II CRISPR loci if present in the organism. This chain is Ribonuclease 3, found in Streptococcus pyogenes serotype M28 (strain MGAS6180).